The sequence spans 573 residues: Glutathione hydrolase 5 proenzyme (573 aa).

Residues 1–8 are Cytoplasmic-facing; sequence MAWGHRAT. A helical; Signal-anchor for type II membrane protein membrane pass occupies residues 9-29; that stretch reads VCLVLLGVGLGLVIVVLAAVL. Topologically, residues 30 to 573 are extracellular; sequence SPRQASCGPG…LRKAGKASGY (544 aa). The N-linked (GlcNAc...) asparagine glycan is linked to N98. R110 contributes to the L-glutamate binding site. N-linked (GlcNAc...) asparagine glycans are attached at residues N185, N204, N277, N303, N347, and N378. The active-site Nucleophile is T389. Residues T407, E428, and 454 to 455 each bind L-glutamate; that span reads SS.

Belongs to the gamma-glutamyltransferase family. In terms of assembly, heterodimer composed of the light and heavy chains. The active site is located in the light chain. Post-translationally, cleaved by autocatalysis into a large and a small subunit. Glycosylated. Very low level of expression. Detected in spleen lymphocytes, medullary and paracortical thymic lymphocytes, lung interstitial cells, bronchial epithelium, proximal tubules in kidney, crypt cells in small intestine, neurons in brain stem and cerebral cortex and in Purkinje cells. In terms of tissue distribution, very low expression.

It localises to the membrane. The enzyme catalyses glutathione + H2O = L-cysteinylglycine + L-glutamate. The catalysed reaction is an S-substituted glutathione + H2O = an S-substituted L-cysteinylglycine + L-glutamate. It catalyses the reaction leukotriene C4 + H2O = leukotriene D4 + L-glutamate. It carries out the reaction S-[(2E,6E,10E)-geranylgeranyl]-L-glutathione + H2O = S-[(2E,6E,10E)-geranylgeranyl]-L-cysteinylglycine + L-glutamate. The enzyme catalyses an N-terminal (5-L-glutamyl)-[peptide] + an alpha-amino acid = 5-L-glutamyl amino acid + an N-terminal L-alpha-aminoacyl-[peptide]. The protein operates within lipid metabolism; leukotriene D4 biosynthesis. Its pathway is sulfur metabolism; glutathione metabolism. Its activity is regulated as follows. Inhibited by serine-borate. Its function is as follows. Cleaves the gamma-glutamyl bond of extracellular glutathione tripeptide (gamma-Glu-Cys-Gly) and certain glutathione conjugates. Hydrolyzes glutathione releasing L-Glu and Cys-Gly dipeptide which is further metabolized to maintain extracellular cysteine levels but also to provide cysteine necessary for intracellular glutathione synthesis. Among glutathione-S-conjugates metabolizes leukotriene C4 (LTC4) and S-geranylgeranyl-glutathione (GGG), but is inactive toward gamma-glutamyl leucine. Converts extracellular LTC4 to LTD4 during acute inflammatory response. Acts as a negative regulator of GGG bioactivity. GGT5 (via GGG catabolism) and ABCC1 (via extracellular transport) establish GGG gradients within lymphoid tissues to position P2RY8-positive lymphocytes at germinal centers in lymphoid follicles and restrict their chemotactic transmigration from blood vessels to bone marrow parenchyma. The transpeptidation reaction, i.e. the transfer of gamma-glutamyl moiety to an acceptor molecule to yield a new gamma-glutamyl compound requires high concentration of dipeptide acceptor and is considered nonphysiological. In Mus musculus (Mouse), this protein is Glutathione hydrolase 5 proenzyme (Ggt5).